A 347-amino-acid polypeptide reads, in one-letter code: NADH-ubiquinone oxidoreductase chain 2 (347 aa).

Helical transmembrane passes span 3–23 (PPIFIIIMTTVISGTMMVLIS), 25–45 (HWLLIWIGFEMNMLAIIPILM), 59–79 (YFLTQATASMILMLGIIINLL), 111–131 (FHFWVPEVTQGISLSSGMILL), 149–169 (INPNLLMSMAIMSMLVAGWGG), 200–220 (LMHLNLVMYIMMTLGTFMLFM), 242–262 (LLILMLMLSLGGLPPLSGFIP), 274–294 (NMIIIPTFMAIAALLSLYFYM), and 325–345 (LLPPLIIMSTMLLPMTPMMLI).

This sequence belongs to the complex I subunit 2 family. As to quaternary structure, core subunit of respiratory chain NADH dehydrogenase (Complex I) which is composed of 45 different subunits. Interacts with TMEM242.

The protein resides in the mitochondrion inner membrane. The catalysed reaction is a ubiquinone + NADH + 5 H(+)(in) = a ubiquinol + NAD(+) + 4 H(+)(out). In terms of biological role, core subunit of the mitochondrial membrane respiratory chain NADH dehydrogenase (Complex I) which catalyzes electron transfer from NADH through the respiratory chain, using ubiquinone as an electron acceptor. Essential for the catalytic activity and assembly of complex I. This is NADH-ubiquinone oxidoreductase chain 2 from Ailurus fulgens (Himalayan red panda).